The sequence spans 578 residues: Peptidyl-prolyl cis-trans isomerase-like 2 (578 aa).

Residues 40–114 form the U-box domain; it reads RRLPFNFCAA…SDSLGAGLSD (75 aa). The interval 240–260 is disordered; that stretch reads KAREQGGDVNRSSTALTKPTG. The PPIase cyclophilin-type domain maps to 321-475; sequence ATGFARMETN…NKILIKDIVI (155 aa). The segment at 505–578 is disordered; the sequence is GTDDDKTTWT…GGGFGNFDNW (74 aa). Residues 538 to 548 show a composition bias toward polar residues; it reads KTTTQQSTPTV. Residues 551–560 are compositionally biased toward acidic residues; sequence ADLEDVDTWE. Residues 569 to 578 show a composition bias toward gly residues; it reads GGGFGNFDNW.

Belongs to the cyclophilin-type PPIase family. PPIL2 subfamily.

The protein localises to the nucleus. The catalysed reaction is [protein]-peptidylproline (omega=180) = [protein]-peptidylproline (omega=0). It carries out the reaction S-ubiquitinyl-[E2 ubiquitin-conjugating enzyme]-L-cysteine + [acceptor protein]-L-lysine = [E2 ubiquitin-conjugating enzyme]-L-cysteine + N(6)-ubiquitinyl-[acceptor protein]-L-lysine.. Its pathway is protein modification; protein ubiquitination. May catalyze the cis-trans isomerization of proline imidic peptide bonds in oligopeptides thereby assisting the folding of proteins. May also function as a chaperone, playing a role in intracellular transport of proteins. May also have a protein ubiquitin ligase activity acting as an E3 ubiquitin protein ligase or as a ubiquitin-ubiquitin ligase promoting elongation of ubiquitin chains on proteins. In Gibberella zeae (strain ATCC MYA-4620 / CBS 123657 / FGSC 9075 / NRRL 31084 / PH-1) (Wheat head blight fungus), this protein is Peptidyl-prolyl cis-trans isomerase-like 2 (CYP8).